Consider the following 309-residue polypeptide: Olfactory receptor 1A2 (309 aa).

Residues 1-25 (MKKENQSFNLDFILLGVTSQQEQNN) are Extracellular-facing. N-linked (GlcNAc...) asparagine glycosylation is present at asparagine 5. The chain crosses the membrane as a helical span at residues 26-49 (VFFVIFLCIYPITLTGNLLIILAI). Over 50-57 (CADIRLHN) the chain is Cytoplasmic. A helical membrane pass occupies residues 58 to 79 (PMYFLLANLSLVDIIFSSVTIP). Residues 80-100 (KVLANHLLGSKFISFGGCLMQ) lie on the Extracellular side of the membrane. Cysteine 97 and cysteine 189 are disulfide-bonded. The chain crosses the membrane as a helical span at residues 101 to 120 (MYFMIALAKADSYTLAAMAY). Topologically, residues 121–139 (DRAVAISCPLHYTTIMSPR) are cytoplasmic. A helical transmembrane segment spans residues 140 to 158 (SCILLIAGSWVIGNTSALP). At 159–195 (HTLLTASLSFCGNQEVANFYCDIMPLLKLSCSDVHFN) the chain is on the extracellular side. A helical membrane pass occupies residues 196 to 218 (VKMMYLGVGVFSLPLLCIIVSYV). At 219 to 235 (QVFSTVFQVPSTKSLFK) the chain is on the cytoplasmic side. A helical membrane pass occupies residues 236 to 258 (AFCTCGSHLTVVFLYYGTTMGMY). The Extracellular segment spans residues 259-270 (FRPLTSYSPKDA). Residues 271 to 290 (VITVMYVAVTPALNPFIYSL) traverse the membrane as a helical segment. At 291-309 (RNWDMKAALQKLFSKRISS) the chain is on the cytoplasmic side.

This sequence belongs to the G-protein coupled receptor 1 family.

The protein resides in the cell membrane. Odorant receptor. The chain is Olfactory receptor 1A2 (OR1A2) from Homo sapiens (Human).